The following is a 260-amino-acid chain: Acetylglutamate kinase (260 aa).

Residues glycine 46–glycine 47, arginine 68, and asparagine 160 contribute to the substrate site.

It belongs to the acetylglutamate kinase family. ArgB subfamily.

It localises to the cytoplasm. It catalyses the reaction N-acetyl-L-glutamate + ATP = N-acetyl-L-glutamyl 5-phosphate + ADP. It participates in amino-acid biosynthesis; L-arginine biosynthesis; N(2)-acetyl-L-ornithine from L-glutamate: step 2/4. Catalyzes the ATP-dependent phosphorylation of N-acetyl-L-glutamate. The chain is Acetylglutamate kinase from Shewanella oneidensis (strain ATCC 700550 / JCM 31522 / CIP 106686 / LMG 19005 / NCIMB 14063 / MR-1).